A 127-amino-acid polypeptide reads, in one-letter code: Putative lipoprotein LprJ (127 aa).

The first 34 residues, 1 to 34 (MTAHTHDGTRTWRTGRQATTLLALLAGVFGGAAS), serve as a signal peptide directing secretion. Cysteine 35 carries the N-palmitoyl cysteine lipid modification. The S-diacylglycerol cysteine moiety is linked to residue cysteine 35. Over 35–99 (CAAPIQADMM…MAEINGMSRD (65 aa)) the chain is Extracellular. The chain crosses the membrane as a helical span at residues 100 to 120 (MASTFTIVAIGTYCPAVIAPL). The Cytoplasmic segment spans residues 121–127 (MPNRLQA).

In terms of assembly, may interact with sensor protein KdpD. Modified by Lgt on Cys-35 with an S-linked diacylglycerol, signal peptide is removed by LspA, modified by Lnt with amide-linked fatty acid.

It localises to the cell membrane. Its function is as follows. Overexpression induces expression of sensor protein kdpD gene at low K(+) concentrations (0 and 250 uM, tested in M.smegatis). The chain is Putative lipoprotein LprJ (lprJ) from Mycobacterium tuberculosis (strain ATCC 25618 / H37Rv).